Reading from the N-terminus, the 208-residue chain is Mediator of RNA polymerase II transcription subunit 18 (208 aa).

Residue S66 is modified to Phosphoserine.

This sequence belongs to the Mediator complex subunit 18 family. As to quaternary structure, component of the Mediator complex, which is composed of MED1, MED4, MED6, MED7, MED8, MED9, MED10, MED11, MED12, MED13, MED13L, MED14, MED15, MED16, MED17, MED18, MED19, MED20, MED21, MED22, MED23, MED24, MED25, MED26, MED27, MED29, MED30, MED31, CCNC, CDK8 and CDC2L6/CDK11. The MED12, MED13, CCNC and CDK8 subunits form a distinct module termed the CDK8 module. Mediator containing the CDK8 module is less active than Mediator lacking this module in supporting transcriptional activation. Individual preparations of the Mediator complex lacking one or more distinct subunits have been variously termed ARC, CRSP, DRIP, PC2, SMCC and TRAP.

It localises to the nucleus. Functionally, component of the Mediator complex, a coactivator involved in the regulated transcription of nearly all RNA polymerase II-dependent genes. Mediator functions as a bridge to convey information from gene-specific regulatory proteins to the basal RNA polymerase II transcription machinery. Mediator is recruited to promoters by direct interactions with regulatory proteins and serves as a scaffold for the assembly of a functional preinitiation complex with RNA polymerase II and the general transcription factors. The protein is Mediator of RNA polymerase II transcription subunit 18 (MED18) of Homo sapiens (Human).